Here is a 210-residue protein sequence, read N- to C-terminus: Thymidylate kinase (210 aa).

ATP is bound at residue 10–17 (GPEGAGKS).

This sequence belongs to the thymidylate kinase family.

It carries out the reaction dTMP + ATP = dTDP + ADP. Phosphorylation of dTMP to form dTDP in both de novo and salvage pathways of dTTP synthesis. The polypeptide is Thymidylate kinase (Pseudomonas putida (strain ATCC 700007 / DSM 6899 / JCM 31910 / BCRC 17059 / LMG 24140 / F1)).